The primary structure comprises 313 residues: Protoheme IX farnesyltransferase (313 aa).

The next 9 helical transmembrane spans lie at 35–55 (LVIF…HPVL), 56–76 (AFTS…LNMW), 98–118 (VSKP…VVTL), 120–140 (ILVN…YVVI), 153–173 (IVIG…AAAG), 180–200 (MLLF…LALF), 226–246 (ILLY…LGYF), 248–268 (AIYG…TLRV), and 285–305 (FKFS…EVIV).

This sequence belongs to the UbiA prenyltransferase family. Protoheme IX farnesyltransferase subfamily.

It localises to the cell inner membrane. It carries out the reaction heme b + (2E,6E)-farnesyl diphosphate + H2O = Fe(II)-heme o + diphosphate. It functions in the pathway porphyrin-containing compound metabolism; heme O biosynthesis; heme O from protoheme: step 1/1. Functionally, converts heme B (protoheme IX) to heme O by substitution of the vinyl group on carbon 2 of heme B porphyrin ring with a hydroxyethyl farnesyl side group. The polypeptide is Protoheme IX farnesyltransferase (Rhodopseudomonas palustris (strain BisB18)).